The chain runs to 104 residues: Large ribosomal subunit protein bL21 (104 aa).

The protein belongs to the bacterial ribosomal protein bL21 family. Part of the 50S ribosomal subunit. Contacts protein L20.

This protein binds to 23S rRNA in the presence of protein L20. The sequence is that of Large ribosomal subunit protein bL21 from Agrobacterium fabrum (strain C58 / ATCC 33970) (Agrobacterium tumefaciens (strain C58)).